We begin with the raw amino-acid sequence, 441 residues long: MQQAAAPKISFVSLGCPKALVDSERIITRLRAEGYELARQHDGADLVIVNTCGFLDSAKQESLAAIGEAMAANGKVIVTGCMGAEPEQIEAAYPGVLSITGPQQYESVLEAVHRAKPALHNPHLDLVPEQGIRLTPRHYAYLKISEGCNNRCSFCIIPKLRGDLVSRSADDVLREAEKLVAAGVKELLVISQDTSAYGVDLKYAESPWKDRTVRAKFIDLARELGELGAWVRLHYVYPYPHVDEVIGLMAEGKVLPYLDIPFQHASPDVLKLMKRPAAQDKTLDRIKRWRADCPDLALRSTFIVGFPGETERDFEFLLDWLDEAEIDRLGAFKYEPVAGAPSNALPDQISAEVKQERWNRLMARQQVISARRLKRKVGTRQQIIIDEVGPTVAKGRSKADAPEIDGSVYLSSRRPLRVGEIVTAKIDRADAYDLHGTVAGF.

The region spanning 7–117 (PKISFVSLGC…VLEAVHRAKP (111 aa)) is the MTTase N-terminal domain. The [4Fe-4S] cluster site is built by Cys16, Cys52, Cys81, Cys148, Cys152, and Cys155. The region spanning 134-371 (LTPRHYAYLK…MARQQVISAR (238 aa)) is the Radical SAM core domain. In terms of domain architecture, TRAM spans 374-440 (KRKVGTRQQI…AYDLHGTVAG (67 aa)).

This sequence belongs to the methylthiotransferase family. RimO subfamily. The cofactor is [4Fe-4S] cluster.

The protein localises to the cytoplasm. The enzyme catalyses L-aspartate(89)-[ribosomal protein uS12]-hydrogen + (sulfur carrier)-SH + AH2 + 2 S-adenosyl-L-methionine = 3-methylsulfanyl-L-aspartate(89)-[ribosomal protein uS12]-hydrogen + (sulfur carrier)-H + 5'-deoxyadenosine + L-methionine + A + S-adenosyl-L-homocysteine + 2 H(+). Its function is as follows. Catalyzes the methylthiolation of an aspartic acid residue of ribosomal protein uS12. In Rhodopseudomonas palustris (strain BisB5), this protein is Ribosomal protein uS12 methylthiotransferase RimO.